The sequence spans 327 residues: Ribose-phosphate pyrophosphokinase (327 aa).

ATP-binding positions include 40–42 (DGE) and 99–100 (RQ). Mg(2+) is bound by residues histidine 134 and aspartate 173. The active site involves lysine 196. D-ribose 5-phosphate-binding positions include arginine 198, aspartate 222, and 226-230 (DTANT).

Belongs to the ribose-phosphate pyrophosphokinase family. Class I subfamily. As to quaternary structure, homohexamer. Requires Mg(2+) as cofactor.

The protein localises to the cytoplasm. The catalysed reaction is D-ribose 5-phosphate + ATP = 5-phospho-alpha-D-ribose 1-diphosphate + AMP + H(+). It participates in metabolic intermediate biosynthesis; 5-phospho-alpha-D-ribose 1-diphosphate biosynthesis; 5-phospho-alpha-D-ribose 1-diphosphate from D-ribose 5-phosphate (route I): step 1/1. Functionally, involved in the biosynthesis of the central metabolite phospho-alpha-D-ribosyl-1-pyrophosphate (PRPP) via the transfer of pyrophosphoryl group from ATP to 1-hydroxyl of ribose-5-phosphate (Rib-5-P). The polypeptide is Ribose-phosphate pyrophosphokinase (Neisseria meningitidis serogroup A / serotype 4A (strain DSM 15465 / Z2491)).